We begin with the raw amino-acid sequence, 85 residues long: U4-theraphotoxin-Hhn1f (85 aa).

An N-terminal signal peptide occupies residues 1 to 22 (MKVTLIAILTCAAVLVLHTTAA). Positions 23–48 (EELEAESQLMEVGMPDTELAAVDEER) are excised as a propeptide. Cys-71 and Cys-82 form a disulfide bridge.

Belongs to the neurotoxin 12 (Hwtx-2) family. 02 (Hwtx-2) subfamily. In terms of tissue distribution, expressed by the venom gland.

The protein resides in the secreted. Its function is as follows. Postsynaptic neurotoxin. This chain is U4-theraphotoxin-Hhn1f, found in Cyriopagopus hainanus (Chinese bird spider).